A 380-amino-acid chain; its full sequence is MSNPSPQVPEGEASTSVCRPKSSMASTSRRQRRERRFRRYLSAGRLVRAQALLQRHPGLDVDAGQPPPLHRACARHDAPALCLLLRLGADPAHQDRHGDTALHAAARQGPDAYTDFFLPLLSRCPSAMGIKNKDGETPGQILGWGPPWDSAEEEEEDEASKEREWRQKLQGELEDEWQEVIGRFEDDASHETQEPESFSAWSDRMAREHAQKRQQQRETEGACRPPRAEGSSHSWRQQEEEQRLFRERARAKEEELRESQARRAQEAPRDPVPEPARAGPRAEHPRGAGRGSLWRFGDVPWPCPGGGDPEAMAAALVARGPPLEEQGALRRYLRVQQVRWHPDRFLQRFRSQIETWELGRVMGAVTALSQALNRHAEALK.

The disordered stretch occupies residues 1–34; the sequence is MSNPSPQVPEGEASTSVCRPKSSMASTSRRQRRE. Residues 13–28 are compositionally biased toward polar residues; the sequence is ASTSVCRPKSSMASTS. ANK repeat units follow at residues 64–93 and 97–133; these read GQPP…DPAH and HGDT…IKNK. Disordered regions lie at residues 131–167 and 185–293; these read KNKD…EWRQ and EDDA…RGSL. Serine 150 bears the Phosphoserine mark. Over residues 150–159 the composition is skewed to acidic residues; that stretch reads SAEEEEEDEA. Basic and acidic residues-rich tracts occupy residues 204 to 221 and 236 to 272; these read RMAR…ETEG and RQQE…RDPV.

In terms of assembly, interacts with CACTIN (via N-terminal domain); the interaction occurs in a pro-inflammatory-independent manner.

Its subcellular location is the nucleus. Involved in the regulation of innate immune response. Acts as negative regulator of Toll-like receptor and interferon-regulatory factor (IRF) signaling pathways. Contributes to the negative regulation of transcriptional activation of NF-kappa-B target genes in response to endogenous pro-inflammatory stimuli. The polypeptide is NF-kappa-B inhibitor-like protein 1 (NFKBIL1) (Sus scrofa (Pig)).